The chain runs to 522 residues: Protein tweety homolog 3 (522 aa).

At 1–43 (MAAAISYTPPWWVNLLHRLPHLNLQWESLNGDFRPEDPDYQQS) the chain is on the extracellular side. The helical transmembrane segment at 44–64 (LMLLACVALSCLALDLLFLLF) threads the bilayer. Over 65 to 87 (YSFWFCCRHRKTEENTNADCCCT) the chain is Cytoplasmic. A helical membrane pass occupies residues 88–108 (VWCVIVATLVCSAGIAVGFYG). Topologically, residues 109–211 (NGETSDGIHR…VDLFDWYRWL (103 aa)) are extracellular. Residues E111 and D114 each coordinate Ca(2+). N-linked (GlcNAc...) asparagine glycans are attached at residues N127 and N145. The chain crosses the membrane as a helical span at residues 212 to 232 (GYLGLLLFHVFICLLVLFGLI). The Cytoplasmic segment spans residues 233-238 (RNSKGT). Residues 239–259 (LICVCFLGMMALIISWASMGL) traverse the membrane as a helical segment. Residues 260-386 (ELAVAVGSSD…LTGFCYDGVE (127 aa)) are Extracellular-facing. Intrachain disulfides connect C271-C381 and C299-C366. N351 carries an N-linked (GlcNAc...) asparagine glycan. A helical membrane pass occupies residues 387-407 (GLIYLVLFSFVTALMFSSIVC). Topologically, residues 408–522 (SVPHTWQQRR…TNRPETDPVH (115 aa)) are cytoplasmic. The tract at residues 483-522 (QNPRCENTPLIGRESPPPSYTSSMRAKYLATNRPETDPVH) is disordered.

Belongs to the tweety family. Homotetramer; disulfide-linked. Forms cis-homodimers in the presence of Ca(2+).

It is found in the cell membrane. It carries out the reaction chloride(in) = chloride(out). It catalyses the reaction L-glutamate(out) = L-glutamate(in). Its function is as follows. May act as a calcium-independent, swelling-dependent volume-regulated anion channel (VRAC-swell) which plays a pivotal role in the process of regulatory volume decrease (RVD) in the brain through the efflux of anions like chloride and organic osmolytes like glutamate. Probable large-conductance Ca(2+)-activated chloride channel. The sequence is that of Protein tweety homolog 3 (ttyh3) from Xenopus laevis (African clawed frog).